Reading from the N-terminus, the 222-residue chain is Acyl-protein thioesterase 1 homolog 2 (222 aa).

Active-site charge relay system residues include Ser116, Asp169, and His202.

It belongs to the AB hydrolase superfamily. AB hydrolase 2 family.

Its subcellular location is the cytoplasm. The protein localises to the nucleus. The enzyme catalyses S-hexadecanoyl-L-cysteinyl-[protein] + H2O = L-cysteinyl-[protein] + hexadecanoate + H(+). Hydrolyzes fatty acids from S-acylated cysteine residues in proteins with a strong preference for palmitoylated G-alpha proteins over other acyl substrates. Mediates the deacylation of G-alpha proteins such as GPA1 in vivo, but has weak or no activity toward palmitoylated Ras proteins. Has weak lysophospholipase activity in vitro; however such activity may not exist in vivo. The sequence is that of Acyl-protein thioesterase 1 homolog 2 from Dictyostelium discoideum (Social amoeba).